A 215-amino-acid chain; its full sequence is MSKVYDWFEERLEIQAIADDITSKYVPPHVNIFYCLGGITLTCFLVQVATGFAMTFYYRPTVTEAFASVQYIMTEANFGWLIRSVHRWSASMMVLMMILHVFRVYLTGGFKKPRELTWVTGVVLGVLTASFGVTGYSLPRDQIGYWAVKIVTGVPEAIPVIGSPLVELLRGSASVGQSTLTRFYSLHTFVLPLLTAVFMLMHFPMIRKQGISGPL.

The chain crosses the membrane as a helical span at residues 32–52 (IFYCLGGITLTCFLVQVATGF). Cysteine 35 contacts heme c. Residues histidine 86 and histidine 100 each contribute to the heme b site. 3 helical membrane-spanning segments follow: residues 90-110 (ASMM…TGGF), 116-136 (LTWV…VTGY), and 186-206 (LHTF…FPMI). Positions 187 and 202 each coordinate heme b.

This sequence belongs to the cytochrome b family. PetB subfamily. In terms of assembly, the 4 large subunits of the cytochrome b6-f complex are cytochrome b6, subunit IV (17 kDa polypeptide, PetD), cytochrome f and the Rieske protein, while the 4 small subunits are PetG, PetL, PetM and PetN. The complex functions as a dimer. Heme b is required as a cofactor. It depends on heme c as a cofactor.

The protein resides in the plastid. It localises to the chloroplast thylakoid membrane. Functionally, component of the cytochrome b6-f complex, which mediates electron transfer between photosystem II (PSII) and photosystem I (PSI), cyclic electron flow around PSI, and state transitions. This chain is Cytochrome b6, found in Vitis vinifera (Grape).